A 492-amino-acid polypeptide reads, in one-letter code: Glutamyl-tRNA(Gln) amidotransferase subunit A (492 aa).

Catalysis depends on charge relay system residues Lys80 and Ser155. Ser179 acts as the Acyl-ester intermediate in catalysis.

It belongs to the amidase family. GatA subfamily. Heterotrimer of A, B and C subunits.

It carries out the reaction L-glutamyl-tRNA(Gln) + L-glutamine + ATP + H2O = L-glutaminyl-tRNA(Gln) + L-glutamate + ADP + phosphate + H(+). Functionally, allows the formation of correctly charged Gln-tRNA(Gln) through the transamidation of misacylated Glu-tRNA(Gln) in organisms which lack glutaminyl-tRNA synthetase. The reaction takes place in the presence of glutamine and ATP through an activated gamma-phospho-Glu-tRNA(Gln). The polypeptide is Glutamyl-tRNA(Gln) amidotransferase subunit A (Mycobacteroides abscessus (strain ATCC 19977 / DSM 44196 / CCUG 20993 / CIP 104536 / JCM 13569 / NCTC 13031 / TMC 1543 / L948) (Mycobacterium abscessus)).